The following is a 620-amino-acid chain: UvrABC system protein C (620 aa).

Residues 13–92 (DKPGVYIMKN…IKKYSPRYNI (80 aa)) form the GIY-YIG domain. One can recognise a UVR domain in the interval 204 to 239 (TSIIKKLKLEMEKAAEELEFEKAAKIRDRILAIELI).

The protein belongs to the UvrC family. Interacts with UvrB in an incision complex.

The protein localises to the cytoplasm. In terms of biological role, the UvrABC repair system catalyzes the recognition and processing of DNA lesions. UvrC both incises the 5' and 3' sides of the lesion. The N-terminal half is responsible for the 3' incision and the C-terminal half is responsible for the 5' incision. This chain is UvrABC system protein C, found in Clostridium perfringens (strain ATCC 13124 / DSM 756 / JCM 1290 / NCIMB 6125 / NCTC 8237 / Type A).